The sequence spans 251 residues: Ubiquinone/menaquinone biosynthesis C-methyltransferase UbiE (251 aa).

S-adenosyl-L-methionine is bound by residues T74, D95, 123–124, and S140; that span reads NA.

The protein belongs to the class I-like SAM-binding methyltransferase superfamily. MenG/UbiE family.

It carries out the reaction a 2-demethylmenaquinol + S-adenosyl-L-methionine = a menaquinol + S-adenosyl-L-homocysteine + H(+). It catalyses the reaction a 2-methoxy-6-(all-trans-polyprenyl)benzene-1,4-diol + S-adenosyl-L-methionine = a 5-methoxy-2-methyl-3-(all-trans-polyprenyl)benzene-1,4-diol + S-adenosyl-L-homocysteine + H(+). It participates in quinol/quinone metabolism; menaquinone biosynthesis; menaquinol from 1,4-dihydroxy-2-naphthoate: step 2/2. It functions in the pathway cofactor biosynthesis; ubiquinone biosynthesis. In terms of biological role, methyltransferase required for the conversion of demethylmenaquinol (DMKH2) to menaquinol (MKH2) and the conversion of 2-polyprenyl-6-methoxy-1,4-benzoquinol (DDMQH2) to 2-polyprenyl-3-methyl-6-methoxy-1,4-benzoquinol (DMQH2). The chain is Ubiquinone/menaquinone biosynthesis C-methyltransferase UbiE from Escherichia coli O1:K1 / APEC.